Reading from the N-terminus, the 283-residue chain is MPELPEVETVRRGLEPAMAGRLIAEARVNRADLRWPFPPRMAERLTGQRVLRLRRRSKYILADLSGGQSLLIHLGMSGRMLVSGAQLGEFFHDHPAPSRHDHVVLEMEGGARITFNDARRFGAMDLVATEAAEAHPLLAVLGPEPLGNAFDGAYLAARLEGRRTPIKAALLDQRIVAGLGNIYVCEVLFRAGLAPGRLAGSLSRAESEGLVPLIREVLLEAIEAGGSSLRDYRQADGELGYFQHTFRVYGREGLPCVTPGCSGTVGRIVQSGRSSFHCPLCQR.

The Schiff-base intermediate with DNA role is filled by Pro-2. Glu-3 (proton donor) is an active-site residue. Lys-58 serves as the catalytic Proton donor; for beta-elimination activity. Positions 100, 119, and 162 each coordinate DNA. An FPG-type zinc finger spans residues 247–283; it reads RVYGREGLPCVTPGCSGTVGRIVQSGRSSFHCPLCQR. Arg-273 functions as the Proton donor; for delta-elimination activity in the catalytic mechanism.

The protein belongs to the FPG family. In terms of assembly, monomer. The cofactor is Zn(2+).

The enzyme catalyses Hydrolysis of DNA containing ring-opened 7-methylguanine residues, releasing 2,6-diamino-4-hydroxy-5-(N-methyl)formamidopyrimidine.. It catalyses the reaction 2'-deoxyribonucleotide-(2'-deoxyribose 5'-phosphate)-2'-deoxyribonucleotide-DNA = a 3'-end 2'-deoxyribonucleotide-(2,3-dehydro-2,3-deoxyribose 5'-phosphate)-DNA + a 5'-end 5'-phospho-2'-deoxyribonucleoside-DNA + H(+). Its function is as follows. Involved in base excision repair of DNA damaged by oxidation or by mutagenic agents. Acts as a DNA glycosylase that recognizes and removes damaged bases. Has a preference for oxidized purines, such as 7,8-dihydro-8-oxoguanine (8-oxoG). Has AP (apurinic/apyrimidinic) lyase activity and introduces nicks in the DNA strand. Cleaves the DNA backbone by beta-delta elimination to generate a single-strand break at the site of the removed base with both 3'- and 5'-phosphates. In Cereibacter sphaeroides (strain KD131 / KCTC 12085) (Rhodobacter sphaeroides), this protein is Formamidopyrimidine-DNA glycosylase.